Here is a 24-residue protein sequence, read N- to C-terminus: Defensin D6 (24 aa).

Belongs to the DEFL family. Group IV subfamily. Distributed in the epidermal cell layer of leaves and in the subepidermal layer region of stems. Not in roots.

The protein resides in the secreted. The protein localises to the cell wall. Functionally, antimicrobial peptide. Active against Fusarium spp., Gram-positive and Gram-negative bacterial pathogens. The polypeptide is Defensin D6 (Spinacia oleracea (Spinach)).